Here is a 1213-residue protein sequence, read N- to C-terminus: Hybrid signal transduction histidine kinase K (1213 aa).

Disordered stretches follow at residues 1–37 (MIEL…NKTN), 98–189 (NNNY…SSSS), 279–392 (NKNV…IPFR), and 495–565 (TTEQ…NYNN). Composition is skewed to low complexity over residues 98–162 (NNNY…QKDQ), 171–189 (SLSS…SSSS), 279–331 (NKNV…NSGA), 339–371 (NNNN…SNNN), 498–511 (QQQQ…QQQQ), and 522–565 (QRQQ…NYNN). 6 consecutive transmembrane segments (helical) span residues 600-618 (IIFN…GSNI), 628-648 (LIIG…IFFW), 652-672 (INKP…SLVI), 676-696 (TGSI…ALTI), 729-749 (IQWS…NLYG), and 768-788 (IIDV…QYFI). Residues 822–1052 (TMSHEIRTPL…TFWFILPLEE (231 aa)) enclose the Histidine kinase domain. A Phosphohistidine; by autocatalysis modification is found at His825. The region spanning 1076–1199 (KVLIAEDNII…QLRSAIEMAI (124 aa)) is the Response regulatory domain. Position 1125 is a 4-aspartylphosphate (Asp1125).

Post-translationally, activation probably requires transfer of a phosphate group between a histidine in the kinase core (transmitter) domain and an aspartate of the receiver domain.

It localises to the nucleus membrane. It catalyses the reaction ATP + protein L-histidine = ADP + protein N-phospho-L-histidine.. In terms of biological role, involved in a signal transduction pathway that regulates morphogenesis and controls entry into the culmination stage. May act via the regA pathway, being activated by a morphogenesis-stimulated ligand, reducing phosphodiesterase regA levels and allowing cAMP level to rise to promote the culmination stage. This protein probably undergoes an ATP-dependent autophosphorylation at a conserved histidine residue in the kinase core, and a phosphoryl group is then transferred to a conserved aspartate residue in the receiver domain. The sequence is that of Hybrid signal transduction histidine kinase K (dhkK) from Dictyostelium discoideum (Social amoeba).